We begin with the raw amino-acid sequence, 484 residues long: Putative transporter B0252.3 (484 aa).

Helical transmembrane passes span I43–C63, S95–A115, L121–S141, I144–A164, V183–L203, Y208–V228, M286–F306, L321–M341, V348–S368, I373–F393, and L433–L453.

The protein belongs to the major facilitator superfamily. Sugar transporter (TC 2.A.1.1) family.

The protein resides in the membrane. This Caenorhabditis elegans protein is Putative transporter B0252.3.